Consider the following 409-residue polypeptide: Peptidase T (409 aa).

Residue histidine 78 participates in Zn(2+) binding. The active site involves aspartate 80. Aspartate 140 is a binding site for Zn(2+). The Proton acceptor role is filled by glutamate 173. Positions 174, 196, and 379 each coordinate Zn(2+).

Belongs to the peptidase M20B family. Zn(2+) is required as a cofactor.

The protein resides in the cytoplasm. It carries out the reaction Release of the N-terminal residue from a tripeptide.. In terms of biological role, cleaves the N-terminal amino acid of tripeptides. The protein is Peptidase T of Salmonella dublin (strain CT_02021853).